A 267-amino-acid chain; its full sequence is tRNA-cytidine(32) 2-sulfurtransferase 1 (267 aa).

A PP-loop motif motif is present at residues 42–47; sequence SGGKDS. [4Fe-4S] cluster contacts are provided by Cys-117, Cys-120, and Cys-208.

It belongs to the TtcA family. In terms of assembly, homodimer. Mg(2+) is required as a cofactor. The cofactor is [4Fe-4S] cluster.

The protein resides in the cytoplasm. The enzyme catalyses cytidine(32) in tRNA + S-sulfanyl-L-cysteinyl-[cysteine desulfurase] + AH2 + ATP = 2-thiocytidine(32) in tRNA + L-cysteinyl-[cysteine desulfurase] + A + AMP + diphosphate + H(+). The protein operates within tRNA modification. Functionally, catalyzes the ATP-dependent 2-thiolation of cytidine in position 32 of tRNA, to form 2-thiocytidine (s(2)C32). The sulfur atoms are provided by the cysteine/cysteine desulfurase (IscS) system. The polypeptide is tRNA-cytidine(32) 2-sulfurtransferase 1 (Francisella tularensis subsp. novicida (strain U112)).